Consider the following 800-residue polypeptide: Protein MEI2-like 5 (800 aa).

2 consecutive RRM domains span residues 168–241 (RTLF…FSIP) and 253–326 (GTLV…PSRP). Residues serine 384 and serine 390 each carry the phosphoserine modification. 2 disordered regions span residues 470–489 (GSPN…TSST) and 776–800 (VVDE…RERS). Residues 471–488 (SPNARSEPSSSSVWSTSS) are compositionally biased toward low complexity. A phosphoserine mark is found at serine 789 and serine 792.

Its function is as follows. Probable RNA-binding protein that plays a role in meiosis and vegetative growth. The chain is Protein MEI2-like 5 (ML5) from Arabidopsis thaliana (Mouse-ear cress).